The primary structure comprises 277 residues: Probable ketoamine kinase HMPREF0351_12196 (277 aa).

84-86 (EWI) serves as a coordination point for ATP. The Proton acceptor role is filled by Asp-186.

The protein belongs to the fructosamine kinase family.

The enzyme catalyses N(6)-(D-ribulosyl)-L-lysine + ATP = N(6)-(3-O-phospho-D-ribulosyl)-L-lysine + ADP + H(+). It catalyses the reaction N-(D-ribulosyl)-cadaverine + ATP = N-(3-O-phospho-D-ribulosyl)-cadaverine + ADP + H(+). It carries out the reaction N(6)-(D-erythrulosyl)-L-lysine + ATP = N(6)-(3-O-phospho-D-erythrulosyl)-L-lysine + ADP + H(+). The catalysed reaction is N-(D-erythrulosyl)-cadaverine + ATP = N-(3-O-phospho-D-erythrulosyl)-cadaverine + ADP + H(+). The enzyme catalyses N(6)-D-ribulosyl-L-lysyl-[protein] + ATP = N(6)-(3-O-phospho-D-ribulosyl)-L-lysyl-[protein] + ADP + H(+). It catalyses the reaction N(6)-(D-erythrulosyl)-L-lysyl-[protein] + ATP = N(6)-(3-O-phospho-D-erythrulosyl)-L-lysyl-[protein] + ADP + H(+). In terms of biological role, ketoamine kinase that phosphorylates ketoamines, such as erythruloselysine, erythrulosecadaverine, ribuloselysine and ribulosecadaverine, on the third carbon of the sugar moiety to generate ketoamine 3-phosphate. Has higher activity on free lysine (erythruloselysine and ribuloselysine), than on ribuloselysine and erythruloselysine residues on glycated proteins. The sequence is that of Probable ketoamine kinase HMPREF0351_12196 from Enterococcus faecium (strain ATCC BAA-472 / TX0016 / DO).